A 1051-amino-acid polypeptide reads, in one-letter code: Transcription intermediary factor 1-alpha (1051 aa).

The segment at 1-42 (MEVAVEKAAAAAAPAGGPAAAAPSGENEAESRQGPDSESGGE) is disordered. K7 is covalently cross-linked (Glycyl lysine isopeptide (Lys-Gly) (interchain with G-Cter in SUMO2)). The segment covering 8–23 (AAAAAAPAGGPAAAAP) has biased composition (low complexity). The RING-type zinc-finger motif lies at 52–77 (CAVCHQNIQSRVPKLLPCLHSFCQRC). The disordered stretch occupies residues 94–115 (SAETPPPAPAPAPAPGSPAGGP). T97 is modified (phosphothreonine). Residues 97-109 (TPPPAPAPAPAPG) show a composition bias toward pro residues. S110 carries the phosphoserine modification. B box-type zinc fingers lie at residues 158–211 (KSNQ…VSPE) and 218–259 (QRPV…YQFI). Positions 163, 166, 187, and 200 each coordinate Zn(2+). K205 participates in a covalent cross-link: Glycyl lysine isopeptide (Lys-Gly) (interchain with G-Cter in SUMO2). Residues C223, H226, C246, and H251 each coordinate Zn(2+). K276 participates in a covalent cross-link: Glycyl lysine isopeptide (Lys-Gly) (interchain with G-Cter in SUMO2). Residues 289–359 (NQIQNRIIEI…AGLSKQLEHV (71 aa)) adopt a coiled-coil conformation. Residues 429–457 (ESQPQMPKQNPVVEQSSQPPGGLPSNQLS) are disordered. A compositionally biased stretch (polar residues) spans 431–457 (QPQMPKQNPVVEQSSQPPGGLPSNQLS). Residues K436 and K458 each participate in a glycyl lysine isopeptide (Lys-Gly) (interchain with G-Cter in SUMO2) cross-link. R469 carries the omega-N-methylarginine modification. Low complexity-rich tracts occupy residues 479–490 (AQRQQVQRRPAP) and 501–510 (PIQQPSISHQ). The interval 479–551 (AQRQQVQRRP…PSQNVPRQTT (73 aa)) is disordered. The span at 526–535 (PNGPVLPPYP) shows a compositional bias: pro residues. Polar residues predominate over residues 538–551 (LRYSPSQNVPRQTT). Glycyl lysine isopeptide (Lys-Gly) (interchain with G-Cter in SUMO2) cross-links involve residues K553 and K642. A disordered region spans residues 644–713 (TGVDHAQPRP…PAGADSTHKV (70 aa)). 3 positions are modified to phosphoserine: S655, S661, and S668. Over residues 655–667 (SNRTVQSPNSSVP) the composition is skewed to polar residues. Over residues 686–708 (SPSASSVGSRGSSGSSSKPAGAD) the composition is skewed to low complexity. Residues K703 and K712 each participate in a glycyl lysine isopeptide (Lys-Gly) (interchain with G-Cter in SUMO2) cross-link. Residues K724 and K742 each participate in a glycyl lysine isopeptide (Lys-Gly) (interchain with G-Cter in SUMO); alternate cross-link. K724 is covalently cross-linked (Glycyl lysine isopeptide (Lys-Gly) (interchain with G-Cter in SUMO1); alternate). Residues K724 and K742 each participate in a glycyl lysine isopeptide (Lys-Gly) (interchain with G-Cter in SUMO2); alternate cross-link. Residues S745 and S769 each carry the phosphoserine modification. The nuclear receptor binding site (NRBS) stretch occupies residues 755-780 (NYPRSILTSLLLNSSQSSASEETVLR). The segment at 771–827 (SSASEETVLRSDAPDSTGDQPGLHQENSSNGKSEWSDASQKSPVHVGETRKEDDPNE) is disordered. The span at 795–812 (QENSSNGKSEWSDASQKS) shows a compositional bias: polar residues. Residue K802 forms a Glycyl lysine isopeptide (Lys-Gly) (interchain with G-Cter in SUMO2) linkage. At S809 the chain carries Phosphoserine. Residue K811 forms a Glycyl lysine isopeptide (Lys-Gly) (interchain with G-Cter in SUMO2) linkage. The residue at position 812 (S812) is a Phosphoserine. Phosphothreonine is present on T819. The segment at 827 to 874 (EDWCAVCQNGGELLCCEKCPKVFHLTCHVPTLTNFPSGEWICTFCRDL) adopts a PHD-type zinc-finger fold. The tract at residues 835-841 (NGGELLC) is interaction with histone H3 that is not methylated at 'Lys-4' (H3K4me0). Residue K876 forms a Glycyl lysine isopeptide (Lys-Gly) (interchain with G-Cter in SUMO2) linkage. Residues 892–908 (KRKSEGLTKLTPIDKRK) carry the Nuclear localization signal motif. One can recognise a Bromo domain in the interval 900–1005 (KLTPIDKRKC…SYFEELLKNL (106 aa)). Residues K950 and K993 each participate in a glycyl lysine isopeptide (Lys-Gly) (interchain with G-Cter in SUMO2) cross-link. The tract at residues 1024 to 1051 (KFSDDSDDDFVQPRKKRLKSTEDRQLLK) is disordered. 2 positions are modified to phosphoserine: S1026 and S1029. Residue K1042 forms a Glycyl lysine isopeptide (Lys-Gly) (interchain with G-Cter in SUMO2) linkage. Residues 1042 to 1051 (KSTEDRQLLK) are compositionally biased toward basic and acidic residues. S1043 is subject to Phosphoserine.

Interacts (via bromo domain) with histone H3 (via N-terminus), provided that it is not methylated at 'Lys-4' (H3K4me0). Does not interact with histone H3 that is methylated at 'Lys-4' (H3K4me1, H3K4me2 or H3K4me3). Interacts (via bromo domain) with histone H3 (via N-terminus) that is acetylated at 'Lys-23' (H3K23ac). Has the highest affinity for histone H3 that is both unmodified at 'Lys-4' (H3K4me0) and acetylated at 'Lys-23' (H3K23ac). Has very low affinity for histone H3 that is methylated at 'Lys-9' (H3K9me), or acetylated at both 'Lys-9' (H3K9ac) and 'Lys-14' (H3K14ac), or acetylated at 'Lys-27' (H3K27ac) (in vitro). Interacts with TRIM16. Interacts with NR3C2/MCR. Interacts with the ligand-binding domain of estrogen receptors (in vitro). Interaction with DNA-bound estrogen receptors requires the presence of estradiol. Interacts with AR, CARM1, KAT5/TIP60, NCOA2/GRIP1, BRD7, CBX1, CBX3 and CBX5. Part of a coactivator complex containing TRIM24, NCOA2/GRIP1 and CARM1. Interacts with p53/TP53 and PML. Post-translationally, sumoylated. Phosphorylated at Ser-768 by ATM kinase induces ubiquitination and degradation during DNA damage. In terms of processing, undergoes ubiquitination-mediated degradation in response to DNA damage. As to expression, detected in embryonic and adult liver. Detected in zygote and throughout embryogenesis (at protein level). Detected in all adult tissues, with the highest expression level in testis.

It localises to the nucleus. It is found in the cytoplasm. The enzyme catalyses S-ubiquitinyl-[E2 ubiquitin-conjugating enzyme]-L-cysteine + [acceptor protein]-L-lysine = [E2 ubiquitin-conjugating enzyme]-L-cysteine + N(6)-ubiquitinyl-[acceptor protein]-L-lysine.. It functions in the pathway protein modification; protein ubiquitination. Its function is as follows. Transcriptional coactivator that interacts with numerous nuclear receptors and coactivators and modulates the transcription of target genes. Interacts with chromatin depending on histone H3 modifications, having the highest affinity for histone H3 that is both unmodified at 'Lys-4' (H3K4me0) and acetylated at 'Lys-23' (H3K23ac). Has E3 protein-ubiquitin ligase activity. Promotes ubiquitination and proteasomal degradation of p53/TP53. Plays a role in the regulation of cell proliferation and apoptosis via its effects on p53/TP53 levels. Up-regulates ligand-dependent transcription activation by AR, GCR/NR3C1, thyroid hormone receptor (TR) and ESR1. Modulates transcription activation by retinoic acid (RA) receptors, such as RARA. Plays a role in regulating retinoic acid-dependent proliferation of hepatocytes. Required for normal transition from proliferating neonatal hepatocytes to quiescent adult hepatocytes. Functionally, transcriptional coactivator that interacts with numerous nuclear receptors and coactivators and modulates the transcription of target genes. Interacts with chromatin depending on histone H3 modifications, having the highest affinity for histone H3 that is both unmodified at 'Lys-4' (H3K4me0) and acetylated at 'Lys-23' (H3K23ac). Has E3 protein-ubiquitin ligase activity. During the DNA damage response, participates in an autoregulatory feedback loop with TP53. Early in response to DNA damage, ATM kinase phosphorylates TRIM24 leading to its ubiquitination and degradation. After sufficient DNA repair has occurred, TP53 activates TRIM24 transcription, ultimately leading to TRIM24-mediated TP53 ubiquitination and degradation. Plays a role in the regulation of cell proliferation and apoptosis, at least in part via its effects on p53/TP53 levels. Up-regulates ligand-dependent transcription activation by AR, GCR/NR3C1, thyroid hormone receptor (TR) and ESR1. Modulates transcription activation by retinoic acid (RA) receptors, including RARA. Plays a role in regulating retinoic acid-dependent proliferation of hepatocytes. Also participates in innate immunity by mediating the specific 'Lys-63'-linked ubiquitination of TRAF3 leading to activation of downstream signal transduction of the type I IFN pathway. Additionally, negatively regulates NLRP3/CASP1/IL-1beta-mediated pyroptosis and cell migration probably by ubiquitinating NLRP3. This is Transcription intermediary factor 1-alpha (Trim24) from Mus musculus (Mouse).